The chain runs to 650 residues: Protein ANTI-SILENCING 1 (650 aa).

One can recognise a BAH domain in the interval 38 to 169; it reads DEYRLYDCVL…VGSCKVVDTI (132 aa). 4 disordered regions span residues 202–223, 229–248, 257–359, and 425–448; these read NGKS…GSVR, AFES…EKEK, KSTL…QKLD, and VTEK…ADDN. Basic and acidic residues-rich tracts occupy residues 259–270 and 277–287; these read TLAEERSNKDSG and NGKDQESEVKK. Residues 302–315 show a composition bias toward polar residues; the sequence is SNSFEASGSRTIHS. Composition is skewed to basic and acidic residues over residues 348 to 358 and 438 to 448; these read LDDRPLKKQKL and RAEDKMSADDN. The 84-residue stretch at 486–569 folds into the RRM domain; that stretch reads TVVLLQNLDP…RPLVASFAKI (84 aa).

In terms of assembly, component of the ASI1-AIPP1-EDM2 (AAE) RNA regulatory complex composed of at least AIPP1/EDM3, ASI1 and EDM2 and may contain CPL2, AIPP2 and AIPP3/BDT1. Binds directly to AIPP1/EDM3 and AIPP2.

Collaboratively with AIPP1/EDM3 and EDM2, the AAE complex regulates alternative RNA processing (e.g. alternative splicing) and epigenetic silencing (e.g. H3K9me2) of intronic heterochromatin-containing genes as well as genic heterochromatin-containing genes by promoting distal 3' polyadenylation; may associate with intronic heterochromatin and bind gene transcripts to modulate polyadenylation. Required to prevent promoter DNA hypermethylation and transcriptional silencing of some transgenes. Plays a similar role to that of the histone H3K9 demethylase JMJ25/IBM1 in preventing CHG methylation in the bodies of numerous genes. RNA-binding protein that ensures the proper expression of JMJ25/IBM1 full-length transcript by associating with an intronic heterochromatic repeat element of JMJ25/IBM1. Also modulates transposable elements (TE) expression. Contributes to a unique mechanism to deal with the collateral effect of silencing intronic repeat elements. The polypeptide is Protein ANTI-SILENCING 1 (Arabidopsis thaliana (Mouse-ear cress)).